The following is a 294-amino-acid chain: Survival motor neuron protein (294 aa).

Over residues 1-12 (MAMSSGGSGGGV) the composition is skewed to gly residues. A disordered region spans residues 1 to 32 (MAMSSGGSGGGVPEQEDSVLFRRGTGQSDDSD). Alanine 2 bears the N-acetylalanine mark. A phosphoserine; by PKA mark is found at serine 4, serine 5, and serine 8. Position 25 is a phosphothreonine (threonine 25). Residues 26-51 (GQSDDSDIWDDTALIKAYDKAVASFK) form an interacts with GEMIN2 region. Phosphoserine occurs at positions 28 and 31. Residue lysine 51 forms a Glycyl lysine isopeptide (Lys-Gly) (interchain with G-Cter in SUMO2) linkage. The interval 59–88 (ICETSGKPKTTPKRKPAKKNKSQKKNTAAS) is disordered. A compositionally biased stretch (basic residues) spans 68-82 (TTPKRKPAKKNKSQK). Phosphothreonine is present on threonine 69. Phosphothreonine; by PKA is present on threonine 85. In terms of domain architecture, Tudor spans 91-151 (QWKVGDKCSA…LSPICEVANN (61 aa)). A required for interaction with RPP20/POP7 region spans residues 97-209 (KCSAIWSEDG…MPGPRLGPGK (113 aa)). Over residues 156-166 (AQENENESQVS) the composition is skewed to low complexity. Residues 156–222 (AQENENESQV…KFNGPPPPPP (67 aa)) are disordered. Serine 187 is subject to Phosphoserine; by PKA. The span at 194–204 (LPPPPPMPGPR) shows a compositional bias: pro residues. The segment covering 206-215 (GPGKPGLKFN) has biased composition (low complexity). A Glycyl lysine isopeptide (Lys-Gly) (interchain with G-Cter in SUMO2) cross-link involves residue lysine 209. Positions 240–267 (PPIIPPPPPICPDSLDDADALGSMLISW) are P2 (binding site for SNRPB). The tract at residues 252–280 (DSLDDADALGSMLISWYMSGYHTGYYMGF) is involved in homooligomerization. Positions 279 to 294 (GFRQNQKEGRCSHSLN) are required for interaction with SYNCRIP.

The protein belongs to the SMN family. Homooligomer; may form higher order homooligomers in the dimer to octamer range. Part of the core SMN complex that contains SMN1, GEMIN2/SIP1, DDX20/GEMIN3, GEMIN4, GEMIN5, GEMIN6, GEMIN7, GEMIN8 and STRAP/UNRIP. Part of the SMN-Sm complex that contains SMN1, GEMIN2/SIP1, DDX20/GEMIN3, GEMIN4, GEMIN5, GEMIN6, GEMIN7, GEMIN8, STRAP/UNRIP and the Sm proteins SNRPB, SNRPD1, SNRPD2, SNRPD3, SNRPE, SNRPF and SNRPG. Component of an import snRNP complex composed of KPNB1, RNUT1, SMN1 and ZNF259. Interacts with DDX20, FBL, NOLA1, RNUT1, SYNCRIP and with several spliceosomal snRNP core Sm proteins, including SNRPB, SNRPD1, SNRPD2, SNRPD3, SNRPE and ILF3. Interacts with GEMIN2; the interaction is direct. Interacts with GEMIN3; the interaction is direct. Interacts with GEMIN8; the interaction is direct. Interacts with SNRPB; the interaction is direct. Interacts (via Tudor domain) with SNRPD1 (via C-terminus); the interaction is direct. Interacts with SNRPD2; the interaction is direct. Interacts (via Tudor domain) with SNRPD3 (via C-terminus); the interaction is direct. Interacts with SNRPE; the interaction is direct. Interacts with OSTF1, LSM10, LSM11 and RPP20/POP7. Interacts (via C-terminal region) with ZPR1 (via C-terminal region). Interacts (via Tudor domain) with COIL. Interacts with SETX; recruits SETX to POLR2A. Interacts with POLR2A (via the C-terminal domain (CTD)). Interacts with PRMT5. Interacts with XRN2. Interacts (via C-terminus) with FMR1 (via C-terminus); the interaction is direct and occurs in a RNA-independent manner. Interacts (via Tudor domain) with SF3B2 ('Arg-508'-methylated form). Interacts with WRAP53/TCAB1. Interacts (via Tudor domain) with ELAVL4 in an RNA-independent manner; the interaction is required for localization of ELAVL4 to RNA granules. Interacts with FRG1. As to quaternary structure, does not homooligomerize. Does not interact with SNRPB. As to expression, expressed in a wide variety of tissues. Expressed at high levels in brain, kidney and liver, moderate levels in skeletal and cardiac muscle, and low levels in fibroblasts and lymphocytes. Also seen at high levels in spinal cord. Present in osteoclasts and mononuclear cells (at protein level).

The protein resides in the nucleus. The protein localises to the gem. Its subcellular location is the cajal body. It is found in the cytoplasm. It localises to the cytoplasmic granule. The protein resides in the perikaryon. The protein localises to the cell projection. Its subcellular location is the neuron projection. It is found in the axon. It localises to the myofibril. The protein resides in the sarcomere. The protein localises to the z line. The SMN complex catalyzes the assembly of small nuclear ribonucleoproteins (snRNPs), the building blocks of the spliceosome, and thereby plays an important role in the splicing of cellular pre-mRNAs. Most spliceosomal snRNPs contain a common set of Sm proteins SNRPB, SNRPD1, SNRPD2, SNRPD3, SNRPE, SNRPF and SNRPG that assemble in a heptameric protein ring on the Sm site of the small nuclear RNA to form the core snRNP (Sm core). In the cytosol, the Sm proteins SNRPD1, SNRPD2, SNRPE, SNRPF and SNRPG are trapped in an inactive 6S pICln-Sm complex by the chaperone CLNS1A that controls the assembly of the core snRNP. To assemble core snRNPs, the SMN complex accepts the trapped 5Sm proteins from CLNS1A forming an intermediate. Within the SMN complex, SMN1 acts as a structural backbone and together with GEMIN2 it gathers the Sm complex subunits. Binding of snRNA inside 5Sm ultimately triggers eviction of the SMN complex, thereby allowing binding of SNRPD3 and SNRPB to complete assembly of the core snRNP. Ensures the correct splicing of U12 intron-containing genes that may be important for normal motor and proprioceptive neurons development. Also required for resolving RNA-DNA hybrids created by RNA polymerase II, that form R-loop in transcription terminal regions, an important step in proper transcription termination. May also play a role in the metabolism of small nucleolar ribonucleoprotein (snoRNPs). The polypeptide is Survival motor neuron protein (SMN1) (Homo sapiens (Human)).